Consider the following 272-residue polypeptide: Phosphate import ATP-binding protein PstB (272 aa).

Residues 26–267 (LEIRNLDLSY…PRKRKTEDYI (242 aa)) form the ABC transporter domain. 58 to 65 (GPSGCGKS) lines the ATP pocket.

It belongs to the ABC transporter superfamily. Phosphate importer (TC 3.A.1.7) family. The complex is composed of two ATP-binding proteins (PstB), two transmembrane proteins (PstC and PstA) and a solute-binding protein (PstS).

The protein resides in the cell inner membrane. It catalyses the reaction phosphate(out) + ATP + H2O = ADP + 2 phosphate(in) + H(+). Functionally, part of the ABC transporter complex PstSACB involved in phosphate import. Responsible for energy coupling to the transport system. In Shewanella denitrificans (strain OS217 / ATCC BAA-1090 / DSM 15013), this protein is Phosphate import ATP-binding protein PstB.